Reading from the N-terminus, the 379-residue chain is tRNA(Met) cytidine acetate ligase (379 aa).

Residues I7–H20, G100, N153, and R178 contribute to the ATP site.

The protein belongs to the TmcAL family.

It localises to the cytoplasm. It catalyses the reaction cytidine(34) in elongator tRNA(Met) + acetate + ATP = N(4)-acetylcytidine(34) in elongator tRNA(Met) + AMP + diphosphate. Catalyzes the formation of N(4)-acetylcytidine (ac(4)C) at the wobble position of elongator tRNA(Met), using acetate and ATP as substrates. First activates an acetate ion to form acetyladenylate (Ac-AMP) and then transfers the acetyl group to tRNA to form ac(4)C34. The polypeptide is tRNA(Met) cytidine acetate ligase (Staphylococcus aureus (strain MRSA252)).